Here is an 819-residue protein sequence, read N- to C-terminus: Plastid division protein CDP1, chloroplastic (819 aa).

The N-terminal 76 residues, 1-76, are a transit peptide targeting the chloroplast; the sequence is MPVAYTFPVL…NAAGGGIHVV (76 aa). At 77–572 the chain is on the stromal side; sequence DNAPSRTSSL…NKIWDEWLSQ (496 aa). The stretch at 419–439 forms a coiled coil; it reads EAEALEKLKQLESNSDSAVRN. The chain crosses the membrane as a helical span at residues 573–593; it reads SSLIGRVSVVALLGCTVFFSL. The Chloroplast intermembrane segment spans residues 594–819; sequence KLSGIRSGRL…FCQSDIQIQK (226 aa). Residues 762 to 782 adopt a coiled-coil conformation; sequence IAGEAAEIEALLEEAAELVDE.

Self-interacts. Interacts (via N-terminus) with ARC3 (via MORN domains). Binds (via N-terminus) to FTSZ2 proteins, FTSZ2-1 and FTSZ2-2. Recruited ARC3 to the middle of the plastid where subsequent complex made of CDP1/PARC6, ARC3 and FtsZ proteins can form; this complex enhances the dynamics of Z rings during chloroplast division. Interacts (via C-terminus) with PDV1 (via C-terminus). Interacts with MIND1. Exclusively expressed in young green tissues such as young cotyledons, shoot apex, emerging leaves and budding inflorescence.

The protein resides in the plastid. It is found in the chloroplast inner membrane. Component of the plastid division machinery required for PDV1 localization to constriction sites. Involved in chloroplast division site placement. Required for the proper formation of FtsZ rings at the division site in nongreen plastids (e.g. etioplasts). Inhibits FtsZ assembly, functioning as an antagonistic regulator of FtsZ dynamics against ARC6, by recruiting ARC3 to the middle of the plastid to facilitate its interaction with FtsZ proteins. Required during stromule biogenesis in the leaf epidermis, especially in non-mesophyll cells plastids. The chain is Plastid division protein CDP1, chloroplastic from Arabidopsis thaliana (Mouse-ear cress).